A 218-amino-acid polypeptide reads, in one-letter code: Non-structural protein NP-1 (218 aa).

Disordered stretches follow at residues 1–89 (MSSG…RTNP) and 195–218 (TESEEITDEEMLSAAESMETDASN). Composition is skewed to basic residues over residues 8–18 (DKHRAYKRKGS) and 27–40 (PWQPHHRSRSRSPI). A compositionally biased stretch (polar residues) spans 58-67 (SHLSSCTASK). The segment covering 73-86 (TKTKENTSGKRDSR) has biased composition (basic and acidic residues). A compositionally biased stretch (acidic residues) spans 196 to 205 (ESEEITDEEM).

It belongs to the Bocaparvovirus Non-structural protein NP-1 family.

The protein resides in the host nucleus. Required for the expression of the capsid proteins. Performs the splicing and internal polyadenylation of the viral capsid-encoding mRNA precursor, which allows its maturation and expression. Transactivates the viral promoter. In Human bocavirus 3 (HBoV3), this protein is Non-structural protein NP-1 (NP1).